Here is a 203-residue protein sequence, read N- to C-terminus: MQNINEIEELIKLISKLPGLGPKSAKRIVLKLINNRDELVKPMANTLAQVYKNVIRCQSCGTLKSNSLGCNNCENSKEKYNKICVVEDIADQWSIENSNIYKGYFHILGGTISSAGQRKEDLLINSLVERVSRENIEEVILATSATVEGQTTAYYIEDSLKKTSTKVTKLAQGLPVGGEIESLDDGTLYSAFKNRTGIKTNSD.

Residues 57–73 (CQSCGTLKSNSLGCNNC) form a C4-type zinc finger. The Toprim domain occupies 81–175 (NKICVVEDIA…KVTKLAQGLP (95 aa)).

The protein belongs to the RecR family.

Functionally, may play a role in DNA repair. It seems to be involved in an RecBC-independent recombinational process of DNA repair. It may act with RecF and RecO. The chain is Recombination protein RecR from Pelagibacter ubique (strain HTCC1062).